A 111-amino-acid polypeptide reads, in one-letter code: Beta-defensin 126 (111 aa).

Residues Met-1 to Gly-20 form the signal peptide. The tract at residues Asn-21–Asp-63 is in vitro binds to LPS, mediates antimicrobial activity and inhibits LPS-mediated inflammation. 3 disulfide bridges follow: Cys-27-Cys-58, Cys-34-Cys-52, and Cys-38-Cys-59.

It belongs to the beta-defensin family. Homodimer or homooligomer; disulfide-linked. In terms of processing, O-glycosylated; glycans contain alpha(2,3)-linked sialic acids.

The protein resides in the secreted. Functionally, highly glycosylated atypical beta-defensin involved in several aspects of sperm function. Facilitates sperm transport in the female reproductive tract and contributes to sperm protection against immunodetection; both functions are probably implicating the negative surface charge provided by its O-linked oligosaccharides in the sperm glycocalyx. Involved in binding of sperm to oviductal epithelial cells to form a sperm reservoir until ovulation. Release from the sperm surface during capacitation and ovaluation by an elevation of oviductal fluid pH is unmasking other surface components and allows sperm to penetrate the cumulus matrix and bind to the zona pellucida of the oocyte. In vitro has antimicrobial activity and may inhibit LPS-mediated inflammation. This is Beta-defensin 126 (DEFB126) from Gorilla gorilla gorilla (Western lowland gorilla).